The primary structure comprises 243 residues: Segregation and condensation protein A (243 aa).

This sequence belongs to the ScpA family. Component of a cohesin-like complex composed of ScpA, ScpB and the Smc homodimer, in which ScpA and ScpB bind to the head domain of Smc. The presence of the three proteins is required for the association of the complex with DNA.

It is found in the cytoplasm. Participates in chromosomal partition during cell division. May act via the formation of a condensin-like complex containing Smc and ScpB that pull DNA away from mid-cell into both cell halves. This is Segregation and condensation protein A from Thermoanaerobacter pseudethanolicus (strain ATCC 33223 / 39E) (Clostridium thermohydrosulfuricum).